A 260-amino-acid polypeptide reads, in one-letter code: Small ribosomal subunit protein uS3 (260 aa).

The KH type-2 domain maps to 39–114 (LRQYIEQKLG…QIRINVVEVQ (76 aa)). A disordered region spans residues 219 to 260 (EVAAPPPSTRDRDRDRGDRDREPRRRQQQRRRQQFEDRSNEG). 2 stretches are compositionally biased toward basic and acidic residues: residues 227–243 (TRDR…EPRR) and 251–260 (QQFEDRSNEG).

The protein belongs to the universal ribosomal protein uS3 family. As to quaternary structure, part of the 30S ribosomal subunit. Forms a tight complex with proteins S10 and S14.

Its function is as follows. Binds the lower part of the 30S subunit head. Binds mRNA in the 70S ribosome, positioning it for translation. This is Small ribosomal subunit protein uS3 from Trichormus variabilis (strain ATCC 29413 / PCC 7937) (Anabaena variabilis).